The following is a 542-amino-acid chain: Chaperonin GroEL 3 (542 aa).

Residues 29-32 (TLGP), 86-90 (DGTTT), Gly-413, 477-479 (NAA), and Asp-493 each bind ATP.

Belongs to the chaperonin (HSP60) family. Forms a cylinder of 14 subunits composed of two heptameric rings stacked back-to-back. Interacts with the co-chaperonin GroES.

It localises to the cytoplasm. The enzyme catalyses ATP + H2O + a folded polypeptide = ADP + phosphate + an unfolded polypeptide.. In terms of biological role, together with its co-chaperonin GroES, plays an essential role in assisting protein folding. The GroEL-GroES system forms a nano-cage that allows encapsulation of the non-native substrate proteins and provides a physical environment optimized to promote and accelerate protein folding. The sequence is that of Chaperonin GroEL 3 from Frankia alni (strain DSM 45986 / CECT 9034 / ACN14a).